A 612-amino-acid chain; its full sequence is 1-deoxy-D-xylulose-5-phosphate synthase (612 aa).

Residues H77 and 118-120 (GHS) each bind thiamine diphosphate. D147 contributes to the Mg(2+) binding site. Thiamine diphosphate is bound by residues 148–149 (AA), N176, Y288, and E365. N176 contacts Mg(2+).

This sequence belongs to the transketolase family. DXPS subfamily. In terms of assembly, homodimer. Requires Mg(2+) as cofactor. Thiamine diphosphate serves as cofactor.

It carries out the reaction D-glyceraldehyde 3-phosphate + pyruvate + H(+) = 1-deoxy-D-xylulose 5-phosphate + CO2. Its pathway is metabolic intermediate biosynthesis; 1-deoxy-D-xylulose 5-phosphate biosynthesis; 1-deoxy-D-xylulose 5-phosphate from D-glyceraldehyde 3-phosphate and pyruvate: step 1/1. Functionally, catalyzes the acyloin condensation reaction between C atoms 2 and 3 of pyruvate and glyceraldehyde 3-phosphate to yield 1-deoxy-D-xylulose-5-phosphate (DXP). In Malacoplasma penetrans (strain HF-2) (Mycoplasma penetrans), this protein is 1-deoxy-D-xylulose-5-phosphate synthase.